A 208-amino-acid polypeptide reads, in one-letter code: Putative ribosomal protein uS2-like (208 aa).

It belongs to the universal ribosomal protein uS2 family.

It localises to the plastid. The protein localises to the chloroplast. This is Putative ribosomal protein uS2-like (rps2-2) from Chlamydomonas reinhardtii (Chlamydomonas smithii).